The sequence spans 331 residues: Probable deacetylase MTH_1194 (331 aa).

H118 acts as the Proton donor/acceptor in catalysis. Residues D155, H157, and D244 each contribute to the Zn(2+) site.

The protein belongs to the histone deacetylase family. It depends on Zn(2+) as a cofactor.

Probable deacetylase. The polypeptide is Probable deacetylase MTH_1194 (Methanothermobacter thermautotrophicus (strain ATCC 29096 / DSM 1053 / JCM 10044 / NBRC 100330 / Delta H) (Methanobacterium thermoautotrophicum)).